The following is a 499-amino-acid chain: Eukaryotic peptide chain release factor GTP-binding subunit ERF3A (499 aa).

The tract at residues 1-69 is disordered; the sequence is MELSEPIVEN…PKSVVAPPGA (69 aa). Over residues 41–50 the composition is skewed to basic and acidic residues; that stretch reads RPPEESAHEM. Residues 72-298 enclose the tr-type G domain; that stretch reads KEHVNVVFIG…DNLPNFNRSV (227 aa). The tract at residues 81-88 is G1; sequence GHVDAGKS. Residue 84-89 coordinates GTP; it reads DAGKST. Positions 137–141 are G2; that stretch reads GKTVE. The segment at 158-161 is G3; sequence DAPG. GTP-binding positions include 220–223 and 262–264; these read NKMD and SGL. The tract at residues 220 to 223 is G4; that stretch reads NKMD. The tract at residues 262–264 is G5; sequence SGL.

The protein belongs to the TRAFAC class translation factor GTPase superfamily. Classic translation factor GTPase family. ERF3 subfamily. Component of the eRF1-eRF3-GTP ternary complex, composed of ETF1/ERF1 and ERF3 (GSPT1/ERF3A or GSPT2/ERF3B) and GTP. Component of the transient SURF (SMG1-UPF1-eRF1-eRF3) complex. The ETF1-GSPT1 complex interacts with JMJD4. Interacts with PABPC1. Interacts with SHFL.

It catalyses the reaction GTP + H2O = GDP + phosphate + H(+). Its function is as follows. GTPase component of the eRF1-eRF3-GTP ternary complex, a ternary complex that mediates translation termination in response to the termination codons UAA, UAG and UGA. GSPT1/ERF3A mediates ETF1/ERF1 delivery to stop codons: The eRF1-eRF3-GTP complex binds to a stop codon in the ribosomal A-site. GTP hydrolysis by GSPT1/ERF3A induces a conformational change that leads to its dissociation, permitting ETF1/ERF1 to accommodate fully in the A-site. Component of the transient SURF complex which recruits UPF1 to stalled ribosomes in the context of nonsense-mediated decay (NMD) of mRNAs containing premature stop codons. Required for SHFL-mediated translation termination which inhibits programmed ribosomal frameshifting (-1PRF) of mRNA from viruses and cellular genes. The chain is Eukaryotic peptide chain release factor GTP-binding subunit ERF3A (GSPT1) from Homo sapiens (Human).